We begin with the raw amino-acid sequence, 494 residues long: Cytochrome P450 2A11 (494 aa).

At Lys379 the chain carries N6-acetyllysine. Cys439 contributes to the heme binding site.

Belongs to the cytochrome P450 family. Heme is required as a cofactor. In terms of tissue distribution, expressed in liver and lung as well as in nasal tissues.

The protein resides in the endoplasmic reticulum membrane. The protein localises to the microsome membrane. It catalyses the reaction an organic molecule + reduced [NADPH--hemoprotein reductase] + O2 = an alcohol + oxidized [NADPH--hemoprotein reductase] + H2O + H(+). Catalyzes the oxygenation of a variety of substrates, including ethanol and procarcinogens such as N-nitrosodiethylamine and phenacetin. Has no or little activity as a coumarin 7-hydroxylase and in the formation of androstenedione from testosterone. The sequence is that of Cytochrome P450 2A11 (CYP2A11) from Oryctolagus cuniculus (Rabbit).